The sequence spans 75 residues: UPF0270 protein PSPPH_1506 (75 aa).

It belongs to the UPF0270 family.

The chain is UPF0270 protein PSPPH_1506 from Pseudomonas savastanoi pv. phaseolicola (strain 1448A / Race 6) (Pseudomonas syringae pv. phaseolicola (strain 1448A / Race 6)).